The sequence spans 703 residues: Metastasis-associated protein MTA1 (703 aa).

Residues 1 to 164 form the BAH domain; it reads MAANMYRVGD…PQQKTLLADK (164 aa). An ELM2 domain is found at 165–276; it reads GEIRVGNRYQ…KAISALVPQG (112 aa). Residue lysine 182 forms a Glycyl lysine isopeptide (Lys-Gly) (interchain with G-Cter in ubiquitin) linkage. The region spanning 283–335 is the SANT domain; sequence DEMEEWSASEANLFEEALEKYGKDFTDIQQDFLPWKSLTSIIEYYYMWKTTDR. At serine 386 the chain carries Phosphoserine. The segment at 393–420 adopts a GATA-type; atypical zinc-finger fold; it reads CESCYTTQSYQWYSWGPPNMQCRLCASC. Residues 437-460 are disordered; sequence DGERPGPNRNNMSPHGIPARSSGS. Residue serine 449 is modified to Phosphoserine. Lysine 509 is covalently cross-linked (Glycyl lysine isopeptide (Lys-Gly) (interchain with G-Cter in SUMO2 and SUMO3)). Serine 522 is subject to Phosphoserine. A compositionally biased stretch (basic and acidic residues) spans 542-552; that stretch reads ETHPRPPKPDP. Positions 542–583 are disordered; sequence ETHPRPPKPDPVKSSSSVLSSLTPAKSAPVINNGSPTILGKR. Residues 545 to 552 carry the SH3-binding motif; sequence PRPPKPDP. Lysine 549 is covalently cross-linked (Glycyl lysine isopeptide (Lys-Gly) (interchain with G-Cter in SUMO2)). Low complexity predominate over residues 553–565; the sequence is VKSSSSVLSSLTP. Threonine 564 is subject to Phosphothreonine. Serine 576 carries the post-translational modification Phosphoserine. Threonine 578 is modified (phosphothreonine). Lysine 614 carries the post-translational modification N6-acetyllysine; alternate. Lysine 614 is covalently cross-linked (Glycyl lysine isopeptide (Lys-Gly) (interchain with G-Cter in ubiquitin); alternate). Position 627 is a phosphoserine (serine 627). The interaction with RBBP4 stretch occupies residues 644–674; that stretch reads DVFYMATEETRKIRKLLSSSETKRAARRPYK. Residues 661–703 are disordered; the sequence is SSSETKRAARRPYKPIALRQSQALPLRPPPPAPVNDEPIVIED. Positions 684–693 match the SH3-binding motif; sequence LPLRPPPPAP. The SUMO interaction motif 1 (SIM); crucial for efficient sumoylation signature appears at 699–703; it reads IVIED.

This sequence belongs to the metastasis-associated protein family. As to quaternary structure, component of the nucleosome remodeling and deacetylase (NuRD) repressor complex, composed of core proteins MTA1, MTA2, MTA3, RBBP4, RBBP7, HDAC1, HDAC2, MBD2, MBD3, and peripherally associated proteins CDK2AP1, CDK2AP2, GATAD2A, GATAD2B, CHD3, CHD4 and CHD5. The exact stoichiometry of the NuRD complex is unknown, and some subunits such as MBD2 and MBD3, GATAD2A and GATAD2B, and CHD3, CHD4 and CHD5 define mutually exclusive NuRD complexes. Interacts with RBBP4; the interaction is direct. Interacts with BMAL1. Interacts with CLOCK. Interacts with COP1. Interacts with CSNK1G2 in the cytoplasm. Interacts with EP300. Interacts with HDAC2. Interacts with ITGB3BP/CENPR. Interacts with MBD3L2. Interacts with MDM2. Interacts with NACC2. Interacts with p53/TP53. Interacts with PIAS1. Interacts with PIAS3. Interacts with PIAS4. Interacts with PWWP2A. Interacts with PWWP2B. Interacts with SENP1. Interacts with SENP2. Interacts with SIX3; facilitates the binding of SIX3 to the core DNA motif of SIX3 promoter. Interacts with SUMO1. Interacts with SUMO2. Interacts with TFCP2L1; which is indispensable for TFCP2L1-mediated self-renewal-promoting effect and endoderm-inhibiting action. Interacts with TFAP2C. Interacts with TPR. Interacts with UBE2I/UBC9. Phosphorylation by CSNK1G2/CK1 triggered by estrogen enhances corepression of estrogen receptor (ER). In terms of processing, acetylation is essential for its transcriptional coactivator activity. Post-translationally, sumoylation positively regulates its transcriptional corepressor activity but does not affect the protein stability. Sumoylated preferentially by SUMO2 or SUMO3 than SUMO1. Sumoylation is enhanced by PIAS1/3/4 and preferentially sumoylated by SUMO2 in the presence of PIAS1/3/4. Desumoylated by SENP1. Ubiquitinated by COP1, which leads to proteasomal degradation. As to expression, isoform 1 abundant in testis and expressed at low levels in brain, heart, lung, liver, and kidney. Isoform 2 abundant in adrenal gland, brain, colon, heart, liver, lung, muscle, prostate, stomach, testis, and thymus and expressed at low levels in duodenum, kidney, pancreas, parotid, and spleen.

The protein resides in the nucleus. It is found in the nucleus envelope. Its subcellular location is the cytoplasm. It localises to the cytoskeleton. The protein localises to the rough endoplasmic reticulum. The protein resides in the golgi apparatus. It is found in the zymogen granule. In terms of biological role, transcriptional coregulator which can act as both a transcriptional corepressor and coactivator. Acts as a component of the histone deacetylase NuRD complex which participates in the remodeling of chromatin. In the NuRD complex, regulates transcription of its targets by modifying the acetylation status of the target chromatin and cofactor accessibility to the target DNA. In conjunction with other components of NuRD, acts as a transcriptional corepressor of BRCA1, ESR1, TFF1 and CDKN1A. Acts as a transcriptional coactivator of BCAS3, and SUMO2, independent of the NuRD complex. Stimulates the expression of WNT1 by inhibiting the expression of its transcriptional corepressor SIX3. Regulates p53-dependent and -independent DNA repair processes following genotoxic stress. Regulates the stability and function of p53/TP53 by inhibiting its ubiquitination by COP1 and MDM2 thereby regulating the p53-dependent DNA repair. Plays a role in the regulation of the circadian clock and is essential for the generation and maintenance of circadian rhythms under constant light and for normal entrainment of behavior to light-dark (LD) cycles. Positively regulates the CLOCK-BMAL1 heterodimer mediated transcriptional activation of its own transcription and the transcription of CRY1. Regulates deacetylation of BMAL1 by regulating SIRT1 expression, resulting in derepressing CRY1-mediated transcription repression. With TFCP2L1, promotes establishment and maintenance of pluripotency in embryonic stem cells (ESCs) and inhibits endoderm differentiation. The chain is Metastasis-associated protein MTA1 (Mta1) from Rattus norvegicus (Rat).